Consider the following 310-residue polypeptide: Putative S-adenosyl-L-methionine-dependent methyltransferase MAP_2076c (310 aa).

S-adenosyl-L-methionine is bound by residues aspartate 131 and 160 to 161 (DL).

This sequence belongs to the UPF0677 family.

Functionally, exhibits S-adenosyl-L-methionine-dependent methyltransferase activity. The chain is Putative S-adenosyl-L-methionine-dependent methyltransferase MAP_2076c from Mycolicibacterium paratuberculosis (strain ATCC BAA-968 / K-10) (Mycobacterium paratuberculosis).